Here is a 426-residue protein sequence, read N- to C-terminus: Probable inactive metalloprotease YmfF (426 aa).

His50 and Glu138 together coordinate Zn(2+).

It belongs to the peptidase M16 family.

The chain is Probable inactive metalloprotease YmfF (ymfF) from Bacillus subtilis (strain 168).